The sequence spans 61 residues: DNA-directed RNA polymerase subunit Rpo6 (61 aa).

The protein belongs to the archaeal Rpo6/eukaryotic RPB6 RNA polymerase subunit family. As to quaternary structure, part of the RNA polymerase complex.

It localises to the cytoplasm. It carries out the reaction RNA(n) + a ribonucleoside 5'-triphosphate = RNA(n+1) + diphosphate. Functionally, DNA-dependent RNA polymerase (RNAP) catalyzes the transcription of DNA into RNA using the four ribonucleoside triphosphates as substrates. This chain is DNA-directed RNA polymerase subunit Rpo6, found in Thermoplasma volcanium (strain ATCC 51530 / DSM 4299 / JCM 9571 / NBRC 15438 / GSS1).